The primary structure comprises 138 residues: MANDLVQARDNSQVFGVARIYASFNDTFVHVTDLSGKETIARVTGGMKVKADRDESSPYAAMLAAQDVAAKCKEVGITAVHVKIRATGGTRTKTPGPGGQAALRALARSGLRIGRIEDVTPVPSDSTRKKGGRRGRRL.

Residues 118 to 138 are disordered; it reads DVTPVPSDSTRKKGGRRGRRL. Positions 129–138 are enriched in basic residues; it reads KKGGRRGRRL.

Belongs to the universal ribosomal protein uS11 family. As to quaternary structure, component of the small ribosomal subunit (SSU). Mature yeast ribosomes consist of a small (40S) and a large (60S) subunit. The 40S small subunit contains 1 molecule of ribosomal RNA (18S rRNA) and 33 different proteins (encoded by 57 genes). The large 60S subunit contains 3 rRNA molecules (25S, 5.8S and 5S rRNA) and 46 different proteins (encoded by 81 genes). uS11 interacts with eS1 forming part of the mRNA exit tunnel. uS11 interacts with snoRNA U3. uS11 interacts with MPP10. Component of the ribosomal small subunit (SSU) processome composed of at least 40 protein subunits and snoRNA U3.

It localises to the cytoplasm. Its subcellular location is the nucleus. It is found in the nucleolus. Component of the ribosome, a large ribonucleoprotein complex responsible for the synthesis of proteins in the cell. The small ribosomal subunit (SSU) binds messenger RNAs (mRNAs) and translates the encoded message by selecting cognate aminoacyl-transfer RNA (tRNA) molecules. The large subunit (LSU) contains the ribosomal catalytic site termed the peptidyl transferase center (PTC), which catalyzes the formation of peptide bonds, thereby polymerizing the amino acids delivered by tRNAs into a polypeptide chain. The nascent polypeptides leave the ribosome through a tunnel in the LSU and interact with protein factors that function in enzymatic processing, targeting, and the membrane insertion of nascent chains at the exit of the ribosomal tunnel. uS11 is involved in nucleolar processing of pre-18S ribosomal RNA and ribosome assembly. This Saccharomyces cerevisiae (strain ATCC 204508 / S288c) (Baker's yeast) protein is Small ribosomal subunit protein uS11B.